We begin with the raw amino-acid sequence, 413 residues long: D-nopaline dehydrogenase (413 aa).

This sequence belongs to the lysopine/nopaline/octopine/opine/vitopine dehydrogenases family. In terms of assembly, homotetramer.

The enzyme catalyses D-nopaline + NADP(+) + H2O = L-arginine + 2-oxoglutarate + NADPH + H(+). This chain is D-nopaline dehydrogenase (nos), found in Agrobacterium tumefaciens (strain T37).